A 792-amino-acid chain; its full sequence is Chloride channel protein CLC-d (792 aa).

Transmembrane regions (helical) follow at residues phenylalanine 78–valine 98, alanine 119–isoleucine 139, arginine 170–glycine 190, leucine 195–histidine 215, glycine 237–leucine 257, glutamine 267–methionine 287, leucine 320–leucine 340, isoleucine 361–leucine 381, leucine 451–proline 471, glutamine 474–valine 494, alanine 508–valine 528, and isoleucine 529–isoleucine 549. CBS domains follow at residues glutamine 592 to phenylalanine 652 and leucine 704 to valine 761. Residues histidine 731–leucine 751 traverse the membrane as a helical segment.

This sequence belongs to the chloride channel (TC 2.A.49) family. Homodimer. Broadly expressed in the plant, but predominantly in the silique.

It localises to the membrane. Its function is as follows. Voltage-gated chloride channel. The sequence is that of Chloride channel protein CLC-d (CLC-D) from Arabidopsis thaliana (Mouse-ear cress).